The following is a 466-amino-acid chain: Ribulose bisphosphate carboxylase large chain (466 aa).

Lysine 5 carries the post-translational modification N6,N6,N6-trimethyllysine. Asparagine 114 and threonine 164 together coordinate substrate. Lysine 166 functions as the Proton acceptor in the catalytic mechanism. Substrate is bound at residue lysine 168. Mg(2+)-binding residues include lysine 192, aspartate 194, and glutamate 195. Position 192 is an N6-carboxylysine (lysine 192). The active-site Proton acceptor is histidine 285. Arginine 286, histidine 318, and serine 370 together coordinate substrate.

This sequence belongs to the RuBisCO large chain family. Type I subfamily. As to quaternary structure, heterohexadecamer of 8 large chains and 8 small chains; disulfide-linked. The disulfide link is formed within the large subunit homodimers. The cofactor is Mg(2+). The disulfide bond which can form in the large chain dimeric partners within the hexadecamer appears to be associated with oxidative stress and protein turnover.

It is found in the plastid. The protein resides in the chloroplast. The catalysed reaction is 2 (2R)-3-phosphoglycerate + 2 H(+) = D-ribulose 1,5-bisphosphate + CO2 + H2O. The enzyme catalyses D-ribulose 1,5-bisphosphate + O2 = 2-phosphoglycolate + (2R)-3-phosphoglycerate + 2 H(+). RuBisCO catalyzes two reactions: the carboxylation of D-ribulose 1,5-bisphosphate, the primary event in carbon dioxide fixation, as well as the oxidative fragmentation of the pentose substrate in the photorespiration process. Both reactions occur simultaneously and in competition at the same active site. The polypeptide is Ribulose bisphosphate carboxylase large chain (Poliothyrsis sinensis (Chinese pearlbloom tree)).